The following is a 1679-amino-acid chain: MEDSAQDAVTAAPSGTPKSKLETLPREDLIKFAKKQMMLLQKAKARCTELDKEVEELKSKPVDGGTDDMIKVLTERLDALLLEKAETEQQCLCLKKENIKMKQEVEDSVTKLEETQKEFEQSHRNYVREMESVKNELIAVHSEHSKEKAALQRDLEGAVHRQAELLEQLKSQSDSEDNVKKLQEEIQNITAAFEEQTSCLQKQLEATSDEKQQEIIHLQKVIEDNAQHYQKDINTFQEEIVQLRATHKEEVNELMSQMETLAKEHEAAVNKLKENRVTLCETSETIPENYQCESESLNEDTSDASQENQKCSVALQEDPFAEHTVYDKVRQLEDSLKELESQHSILKDEVTYMNNLKLKLEMDAQHIKDEFFHEREDLEFKINELLLAKEEQSYVVEKLKYEREDLNRQLCCTVEQHNKEIQRLQEHHQKEISELSETFMSGSEKEKLALMFEIQGLKEQCENLQHEKQEVVLNYESLREMMEILQTELGESAGKISQEFETMKQQQASDVHELQQKLRTAFNEKDALLETINRLQGENEKLLSQELVSELESTMKNLKADNSMYLASLGQKDTLLQELEAKISSLAEEKDDFISKIKTSREEIDDLHQKWEREQKLSVELREAAEQAAQHNSELRQRVSELTGKLDEILREKSQNDQNIMVQMKTMTEDQEALSSKIKSLYEENNRLHSEKVQLSRDLEALQSQQDFAYKEHVAEFEKKLQLMVEERDDLNKLLENEQLQKSFVKTQLYEFLKQMRPSILEDNEEEDVVTVLKAVGESLVTVKEEKHNLVFEYDARVLELERRIKCLQEESVVQCEELRALVRDSEQEKILLRKELDEVTSTKEALQCDILEMKNTNEKTSLENQTLSTRVEELSRSLHSKNEVHNEKDLVIEHENLRLSLEQRESELQDVRAELMLLKDSLEKSPSVKNDQLSLVKELEEKIESLEKESKDKDEKISKIKLVAVRAKKELDSNRKEAQTLRDELESVQSEKDRLSASMKEFIQGAESYKNLLLEYDKQSEQLDVEKERANNFEHHIEDLTKQLRDSTCQYEKLTSDNEDLLARIETLQANARLLEAQILEVQRAKGVVEKELEAEKLQKEQKIKEHVSTTNELEELQLQFQKEKKQLQKTMQELELVKKDAQQTTLMNMEIADYERLMKELNQKLTNKNSKIEDLEQEMKIQKQKQETLQEEMTSLQSSVQHYEEKNAQIKQLLVKTKKELADAKQAETDHLLLQASLKGELEASQQQVEVYKIQLAEMTSEKHKIHEHLKTSAEQHQRTLSAYQQRVVALQEESRTAKAEQAAVTSEFENYKVRVHNVLKQQKNKSVSQAETEGAKQEREHLEMLIDQLKIKLQDSQNSLQISVSEFQTLQSEHDTLLERHNRMLQETVTKEAELREKLCSAQSENTMLKSEHAQTMCQLTSQNEALRNSFRDQVRHLQDEHRKTVETLQHQLSKVETQLFQLKSEPPTKSPASSHQPSKSLRERRTTDLPLLDMHTVTREEGEGMETTDSESVSSAGTHIQSLEQLLSSPDSKLERLTEASLWHTEFTKEELAEKLSSTTKSADHLNGLLRETEATNAILMEQIKLLKSEIRRLERNQEREKSVANLEYLKNVLLRFIFLKPGSERERLLPVIDTMLQLSPEEKGKLATVAQGEEESASRSSGWASYLHSWSGLR.

Met1 carries the N-acetylmethionine modification. 2 disordered regions span residues Met1 to Thr23 and Leu1466 to Thr1522. Positions Lys35 to Glu1469 form a coiled coil. Phosphoserine occurs at positions 1474 and 1478. Polar residues predominate over residues Ser1474–Lys1483. Positions His1569–Val1608 are mediates interaction with RAB6A. Residues His1569–Arg1679 are mediates interaction with RAB9A. In terms of domain architecture, GRIP spans Arg1604–Val1654.

As to quaternary structure, homodimer. Interacts (via GRIP domain) with RAB6A (preferentially in its GTP-bound form). May interact (RAB6A-dependent) with ARL1; might be involved in GCC2 Golgi localization. Interacts with CLASP1 and CLASP2; recruits both proteins to membranes of the TGN. Interacts with STX16. Interacts (probably via GRIP domain) with RAB9A (preferentially in its GTP-bound form).

It localises to the cytoplasm. It is found in the golgi apparatus. Its subcellular location is the trans-Golgi network membrane. In terms of biological role, golgin which probably tethers transport vesicles to the trans-Golgi network (TGN) and regulates vesicular transport between the endosomes and the Golgi. As a RAB9A effector it is involved in recycling of the mannose 6-phosphate receptor from the late endosomes to the TGN. May also play a role in transport between the recycling endosomes and the Golgi. Required for maintenance of the Golgi structure, it is involved in the biogenesis of noncentrosomal, Golgi-associated microtubules through recruitment of CLASP1 and CLASP2. The polypeptide is GRIP and coiled-coil domain-containing protein 2 (Gcc2) (Rattus norvegicus (Rat)).